Here is a 347-residue protein sequence, read N- to C-terminus: MSVMFDPDTAIYPFPPKPTPLSIDEKAYYREKIKRLLKERNAVMVAHYYTDPEIQQLAEETGGCISDSLEMARFGAKHPASTLLVAGVRFMGETAKILSPEKTILMPTLQAECSLDLGCPVEEFNAFCDAHPDRTVVVYANTSAAVKARADWVVTSSIAVELIDHLDSLGEKIIWAPDKHLGCYVQKQTGADILCWQGACIVHDEFKTQALTRLQEEYPDAAILVHPESPQAIVEMADAVGSTSQLIAAAKTLPHQRLIVATDRGIFYKMQQAVPDKELLEAPTAGEGATCRSCAHCPWMAMNGLQAIAEALELEGSNHEVYVDERLLERALVPLNRMLDFAATLRG.

Iminosuccinate contacts are provided by H47 and S68. C113 contacts [4Fe-4S] cluster. Iminosuccinate-binding positions include 139 to 141 (YAN) and S156. A [4Fe-4S] cluster-binding site is contributed by C200. Residues 226–228 (HPE) and T243 contribute to the iminosuccinate site. C297 lines the [4Fe-4S] cluster pocket.

The protein belongs to the quinolinate synthase family. Type 1 subfamily. [4Fe-4S] cluster serves as cofactor.

It localises to the cytoplasm. It carries out the reaction iminosuccinate + dihydroxyacetone phosphate = quinolinate + phosphate + 2 H2O + H(+). It participates in cofactor biosynthesis; NAD(+) biosynthesis; quinolinate from iminoaspartate: step 1/1. Functionally, catalyzes the condensation of iminoaspartate with dihydroxyacetone phosphate to form quinolinate. This is Quinolinate synthase from Escherichia coli O45:K1 (strain S88 / ExPEC).